The chain runs to 64 residues: Large ribosomal subunit protein uL29 (64 aa).

The protein belongs to the universal ribosomal protein uL29 family.

The chain is Large ribosomal subunit protein uL29 from Acaryochloris marina (strain MBIC 11017).